A 1275-amino-acid chain; its full sequence is Inner capsid protein lambda-1 (1275 aa).

Over residues 1–12 (MKRIPRKTRGKS) the composition is skewed to basic residues. Residues 1–147 (MKRIPRKTRG…NVDNEGGDNQ (147 aa)) form a disordered region. The span at 18-35 (DSTERADDGSAQLRDKQS) shows a compositional bias: basic and acidic residues. The segment covering 55 to 66 (TRPSLQTVQKAT) has biased composition (polar residues). Basic and acidic residues-rich tracts occupy residues 80–98 (AVDK…HVEA) and 105–117 (ATKR…DKQK). Polar residues predominate over residues 118 to 139 (AQVTYNDTGINNANELSRSGNV). The C2H2-type zinc finger occupies 181–203 (YQCHVCSAVLFSPLDLDAHVASH).

It belongs to the turreted BTV-fold inner capsid family. As to quaternary structure, homodecamer; each decamer is made up of two conformers of VP2, called VP2A and VP2B. 12 homodecamers assemble to form an icosahedral capsid. Interacts with protein mu-NS; in viral inclusions. Requires Mg(2+) as cofactor. It depends on Mn(2+) as a cofactor.

The protein resides in the virion. It carries out the reaction ATP + H2O = ADP + phosphate + H(+). Functionally, inner capsid protein that self-assembles to form an icosahedral capsid with a T=2 symmetry, which consists of 120 copies of VP2, with channels at each of its five-fold vertices. This capsid constitutes the innermost concentric layer of the viral mature particle. Displays NTPase, RNA 5'-triphosphatase (RTPase) and RNA helicase activities and probably participates in transcription of the viral genome. Helicase activity might be involved in unwinding or reannealing dsRNA during RNA synthesis. RTPase enzymatic activity represents the first step in RNA capping, which yields a 5'-diphosphorylated plus-strand RNA. The chain is Inner capsid protein lambda-1 from Reovirus type 2 (strain D5/Jones) (T2J).